Here is a 252-residue protein sequence, read N- to C-terminus: Small ribosomal subunit protein uS3 (252 aa).

The region spanning Ile-39–Lys-111 is the KH type-2 domain. The segment at Lys-222–Asn-252 is disordered. Polar residues predominate over residues Gly-241 to Asn-252.

The protein belongs to the universal ribosomal protein uS3 family. In terms of assembly, part of the 30S ribosomal subunit. Forms a tight complex with proteins S10 and S14.

Binds the lower part of the 30S subunit head. Binds mRNA in the 70S ribosome, positioning it for translation. In Onion yellows phytoplasma (strain OY-M), this protein is Small ribosomal subunit protein uS3.